The sequence spans 162 residues: AP-1 complex subunit sigma-2 (162 aa).

The protein belongs to the adaptor complexes small subunit family. As to quaternary structure, adaptor protein complex 1 (AP-1) is a heterotetramer composed of two large adaptins (gamma-type subunit and beta-type subunit), a medium adaptin (mu-type subunit) and a small adaptin (sigma-type subunit). As to expression, expressed in roots, stems, leaves, flowers and siliques (developing fruits and seeds).

It is found in the golgi apparatus. Its subcellular location is the cytoplasmic vesicle. The protein localises to the clathrin-coated vesicle membrane. In terms of biological role, subunit of clathrin-associated adaptor protein complex 1 that plays a role in protein sorting at the trans-Golgi network and early endosomes (TGN/EE). The AP complexes mediate the recruitment of clathrin to membranes and the recognition of sorting signals within the cytosolic tails of transmembrane cargo molecules. The chain is AP-1 complex subunit sigma-2 (AAP19-2) from Arabidopsis thaliana (Mouse-ear cress).